The chain runs to 487 residues: Glutamyl-tRNA(Gln) amidotransferase subunit A (487 aa).

Residues Lys80 and Ser155 each act as charge relay system in the active site. Ser179 (acyl-ester intermediate) is an active-site residue.

The protein belongs to the amidase family. GatA subfamily. As to quaternary structure, heterotrimer of A, B and C subunits.

It carries out the reaction L-glutamyl-tRNA(Gln) + L-glutamine + ATP + H2O = L-glutaminyl-tRNA(Gln) + L-glutamate + ADP + phosphate + H(+). Its function is as follows. Allows the formation of correctly charged Gln-tRNA(Gln) through the transamidation of misacylated Glu-tRNA(Gln) in organisms which lack glutaminyl-tRNA synthetase. The reaction takes place in the presence of glutamine and ATP through an activated gamma-phospho-Glu-tRNA(Gln). The chain is Glutamyl-tRNA(Gln) amidotransferase subunit A from Leptospira interrogans serogroup Icterohaemorrhagiae serovar copenhageni (strain Fiocruz L1-130).